The chain runs to 441 residues: 3-phosphoshikimate 1-carboxyvinyltransferase (441 aa).

Residues Lys-22, Ser-23, and Arg-27 each contribute to the 3-phosphoshikimate site. Lys-22 contacts phosphoenolpyruvate. Phosphoenolpyruvate contacts are provided by Gly-95 and Arg-123. 4 residues coordinate 3-phosphoshikimate: Ser-168, Gln-170, Asp-321, and Lys-348. Gln-170 serves as a coordination point for phosphoenolpyruvate. The active-site Proton acceptor is Asp-321. Arg-352 and Arg-400 together coordinate phosphoenolpyruvate.

Belongs to the EPSP synthase family. Monomer.

The protein localises to the cytoplasm. It catalyses the reaction 3-phosphoshikimate + phosphoenolpyruvate = 5-O-(1-carboxyvinyl)-3-phosphoshikimate + phosphate. Its pathway is metabolic intermediate biosynthesis; chorismate biosynthesis; chorismate from D-erythrose 4-phosphate and phosphoenolpyruvate: step 6/7. Its function is as follows. Catalyzes the transfer of the enolpyruvyl moiety of phosphoenolpyruvate (PEP) to the 5-hydroxyl of shikimate-3-phosphate (S3P) to produce enolpyruvyl shikimate-3-phosphate and inorganic phosphate. In Novosphingobium aromaticivorans (strain ATCC 700278 / DSM 12444 / CCUG 56034 / CIP 105152 / NBRC 16084 / F199), this protein is 3-phosphoshikimate 1-carboxyvinyltransferase.